A 381-amino-acid polypeptide reads, in one-letter code: Beta-1,4-galactosyltransferase 5 (381 aa).

The Cytoplasmic segment spans residues M1–S11. A helical; Signal-anchor for type II membrane protein transmembrane segment spans residues F12 to A32. Over P33–Y381 the chain is Lumenal. 3 N-linked (GlcNAc...) asparagine glycosylation sites follow: N73, N82, and N120. C106 and C151 are disulfide-bonded. UDP-alpha-D-galactose contacts are provided by residues P162–R166, F201–R203, V228–D229, Y257, and W289. A disulfide bond links C222 and C241. Residue D229 participates in Mn(2+) binding. N-acetyl-D-glucosamine is bound at residue G291–D294. H322 provides a ligand contact to Mn(2+). H322–H323 contributes to the UDP-alpha-D-galactose binding site. R333 lines the N-acetyl-D-glucosamine pocket. N-linked (GlcNAc...) asparagine glycosylation occurs at N366.

It belongs to the glycosyltransferase 7 family. Requires Mn(2+) as cofactor.

The protein localises to the golgi apparatus. It localises to the golgi stack membrane. It carries out the reaction a beta-D-glucosyl-(1&lt;-&gt;1')-N-acylsphing-4-enine + UDP-alpha-D-galactose = a beta-D-Gal-(1-&gt;4)-beta-D-Glc-(1&lt;-&gt;1)-Cer(d18:1(4E)) + UDP + H(+). It functions in the pathway protein modification; protein glycosylation. It participates in sphingolipid metabolism. Functionally, catalyzes the synthesis of lactosylceramide (LacCer) via the transfer of galactose from UDP-galactose to glucosylceramide (GlcCer). Required for proper patterning of the dorsoventral axis during embryogenesis through the regulation of BMP signaling. Plays a role in proteoglycan glycosylation that is required for BMP-dependent specification of the dorsoventral axis. The polypeptide is Beta-1,4-galactosyltransferase 5 (b4galt5) (Danio rerio (Zebrafish)).